The following is a 244-amino-acid chain: Venom nerve growth factor 3 (244 aa).

An N-terminal signal peptide occupies residues 1 to 18; it reads MSMLCYTLIIAFLIGIWA. The propeptide occupies 19 to 125; it reads APKSEDNVPL…TLNRNIRAKR (107 aa). The span at 47-66 shows a compositional bias: basic and acidic residues; sequence GLKTSRNTDQRHPAPKKAED. A disordered region spans residues 47-67; that stretch reads GLKTSRNTDQRHPAPKKAEDQ. 3 cysteine pairs are disulfide-bonded: Cys139–Cys205, Cys181–Cys233, and Cys193–Cys235.

The protein belongs to the NGF-beta family. As to quaternary structure, homodimer; non-covalently linked. In terms of tissue distribution, expressed by the venom gland.

Its subcellular location is the secreted. Its function is as follows. Nerve growth factor is important for the development and maintenance of the sympathetic and sensory nervous systems. It stimulates division and differentiation of sympathetic and embryonic sensory neurons as well as basal forebrain cholinergic neurons in the brain. Its relevance in the snake venom is not clear. However, it has been shown to inhibit metalloproteinase-dependent proteolysis of platelet glycoprotein Ib alpha, suggesting a metalloproteinase inhibition to prevent metalloprotease autodigestion and/or protection against prey proteases. Binds a lipid between the two protein chains in the homodimer. The lipid-bound form promotes histamine relase from mouse mast cells, contrary to the lipid-free form. The polypeptide is Venom nerve growth factor 3 (Notechis scutatus scutatus (Mainland tiger snake)).